A 227-amino-acid polypeptide reads, in one-letter code: Cytochrome c oxidase subunit 2 (227 aa).

Over 1–14 (MAYPMQLGFQDATS) the chain is Mitochondrial intermembrane. A helical membrane pass occupies residues 15 to 45 (PIMEELLHFHDHTLMIVFLISSLVLYIISLM). Over 46 to 59 (LTTKLTHTSTMDAQ) the chain is Mitochondrial matrix. Residues 60–87 (EVETIWTILPAIILILIALPSLRILYMM) form a helical membrane-spanning segment. At 88-227 (DEINNPSLTV…YFEKWSASML (140 aa)) the chain is on the mitochondrial intermembrane side. Positions 161, 196, 198, 200, 204, and 207 each coordinate Cu cation. Position 198 (Glu198) interacts with Mg(2+). Tyr218 is subject to Phosphotyrosine.

Belongs to the cytochrome c oxidase subunit 2 family. In terms of assembly, component of the cytochrome c oxidase (complex IV, CIV), a multisubunit enzyme composed of 14 subunits. The complex is composed of a catalytic core of 3 subunits MT-CO1, MT-CO2 and MT-CO3, encoded in the mitochondrial DNA, and 11 supernumerary subunits COX4I, COX5A, COX5B, COX6A, COX6B, COX6C, COX7A, COX7B, COX7C, COX8 and NDUFA4, which are encoded in the nuclear genome. The complex exists as a monomer or a dimer and forms supercomplexes (SCs) in the inner mitochondrial membrane with NADH-ubiquinone oxidoreductase (complex I, CI) and ubiquinol-cytochrome c oxidoreductase (cytochrome b-c1 complex, complex III, CIII), resulting in different assemblies (supercomplex SCI(1)III(2)IV(1) and megacomplex MCI(2)III(2)IV(2)). Found in a complex with TMEM177, COA6, COX18, COX20, SCO1 and SCO2. Interacts with TMEM177 in a COX20-dependent manner. Interacts with COX20. Interacts with COX16. Cu cation serves as cofactor.

It is found in the mitochondrion inner membrane. It carries out the reaction 4 Fe(II)-[cytochrome c] + O2 + 8 H(+)(in) = 4 Fe(III)-[cytochrome c] + 2 H2O + 4 H(+)(out). In terms of biological role, component of the cytochrome c oxidase, the last enzyme in the mitochondrial electron transport chain which drives oxidative phosphorylation. The respiratory chain contains 3 multisubunit complexes succinate dehydrogenase (complex II, CII), ubiquinol-cytochrome c oxidoreductase (cytochrome b-c1 complex, complex III, CIII) and cytochrome c oxidase (complex IV, CIV), that cooperate to transfer electrons derived from NADH and succinate to molecular oxygen, creating an electrochemical gradient over the inner membrane that drives transmembrane transport and the ATP synthase. Cytochrome c oxidase is the component of the respiratory chain that catalyzes the reduction of oxygen to water. Electrons originating from reduced cytochrome c in the intermembrane space (IMS) are transferred via the dinuclear copper A center (CU(A)) of subunit 2 and heme A of subunit 1 to the active site in subunit 1, a binuclear center (BNC) formed by heme A3 and copper B (CU(B)). The BNC reduces molecular oxygen to 2 water molecules using 4 electrons from cytochrome c in the IMS and 4 protons from the mitochondrial matrix. The chain is Cytochrome c oxidase subunit 2 (MT-CO2) from Boselaphus tragocamelus (Nilgai).